Here is a 1001-residue protein sequence, read N- to C-terminus: Protein MEI2-like 4 (1001 aa).

The tract at residues 100-120 (HANLPPSPWRPDQETGRQTDS) is disordered. RRM domains follow at residues 275 to 348 (RTLF…YSIP) and 360 to 433 (GTIV…TSRL). Disordered regions lie at residues 767–815 (GGPS…KKQY) and 941–1001 (FHSD…PAKD). Residues 793 to 803 (PGERMRSRRND) are compositionally biased toward basic and acidic residues. Positions 978–994 (DISITSVNCDTSTNGVD) are enriched in polar residues.

Its function is as follows. Probable RNA-binding protein that may play a role in growth regulation. This chain is Protein MEI2-like 4 (ML4), found in Oryza sativa subsp. japonica (Rice).